We begin with the raw amino-acid sequence, 1366 residues long: Protein HUA2-LIKE 2 (1366 aa).

The PWWP domain maps to 24–81 (VGDLVLAKVKGFPAWPAVVSEPEKWDASPDSKKVFVHFFGTQQIAFCNPGDVEAFTEE). The segment covering 111 to 124 (LKQQERASDPKSAE) has biased composition (basic and acidic residues). Disordered regions lie at residues 111–138 (LKQQ…TLMP), 203–319 (TYSS…SGSK), 384–403 (NVQT…CEEN), 427–451 (EANS…AQTS), and 787–808 (SESA…TGEK). The span at 213 to 252 (VRSQNCAPQNETCPVQRSKSPSRLQTEKLQSSMLQNSDGG) shows a compositional bias: polar residues. The span at 391–403 (SHEKFTERPCEEN) shows a compositional bias: basic and acidic residues. The span at 787-803 (SESANDMQNNSSGSPNI) shows a compositional bias: polar residues. One can recognise a CID domain in the interval 836 to 977 (DVQSTRESYE…HHIRELDSHS (142 aa)). 2 disordered regions span residues 1027 to 1076 (LKDE…TAER) and 1128 to 1366 (TSHQ…QRSD). Acidic residues predominate over residues 1032–1052 (GGSDSEGGCDSEGGSDSDGGD). Over residues 1057-1066 (TPEHESRILE) the composition is skewed to basic and acidic residues. Over residues 1138-1152 (PPLPSSSPPPPPAPP) the composition is skewed to pro residues. A compositionally biased stretch (polar residues) spans 1191–1223 (LSGSTMHYQGPESSYISGVQLTNSIPQADGSNF). Residues 1229–1244 (PSHPHPHPPPPPPPPQ) are compositionally biased toward pro residues. Composition is skewed to basic and acidic residues over residues 1251-1262 (EPGHVLKSHRDA) and 1275-1298 (CDER…RDNW). Residues 1299 to 1309 (RYPPSSSYGSR) are compositionally biased toward low complexity.

Expressed throughout young primordia, and vegetative and reproductive apices.

It localises to the nucleus. Functionally, probable transcription factor that acts with partial redundancy with HULK1 and HULK3. Plays diverse and essential roles in the control of plant development, physiology and flowering time. The chain is Protein HUA2-LIKE 2 from Arabidopsis thaliana (Mouse-ear cress).